We begin with the raw amino-acid sequence, 208 residues long: MRDPVDYFHNSLVPMVVEQSSRGERAFDIYSRLLRERIIFLTGPVEDQGASLIVAQLLFLEAENPKKEISFYINSPGGVVTSGLSIYDTMQFIRCPVTTLCVGQAASMGSLLLAAGEAGHRFALPNARIMVHQPSGGFQGQATDILIHAREIEALKKRLNEIYVKHTGRDYETIHQALERDNFMTADAAKEFGLIDDILHKRPEPAAA.

The Nucleophile role is filled by serine 107. Residue histidine 132 is part of the active site.

The protein belongs to the peptidase S14 family. Fourteen ClpP subunits assemble into 2 heptameric rings which stack back to back to give a disk-like structure with a central cavity, resembling the structure of eukaryotic proteasomes.

The protein localises to the cytoplasm. It catalyses the reaction Hydrolysis of proteins to small peptides in the presence of ATP and magnesium. alpha-casein is the usual test substrate. In the absence of ATP, only oligopeptides shorter than five residues are hydrolyzed (such as succinyl-Leu-Tyr-|-NHMec, and Leu-Tyr-Leu-|-Tyr-Trp, in which cleavage of the -Tyr-|-Leu- and -Tyr-|-Trp bonds also occurs).. Its function is as follows. Cleaves peptides in various proteins in a process that requires ATP hydrolysis. Has a chymotrypsin-like activity. Plays a major role in the degradation of misfolded proteins. This chain is ATP-dependent Clp protease proteolytic subunit, found in Methylorubrum populi (strain ATCC BAA-705 / NCIMB 13946 / BJ001) (Methylobacterium populi).